We begin with the raw amino-acid sequence, 258 residues long: Protein OS-9 homolog (258 aa).

The signal sequence occupies residues 1–18; it reads MNWTSLVYLWFIFKSIFA. N-linked (GlcNAc...) asparagine glycosylation is found at asparagine 2, asparagine 51, and asparagine 70. The region spanning 114–237 is the MRH domain; the sequence is TSCVFSFNLH…HINVPKLCSL (124 aa). Cysteine 116 and cysteine 132 are disulfide-bonded. Residues tryptophan 127 and glutamine 139 each contribute to the a mannooligosaccharide derivative site. Residue asparagine 165 is glycosylated (N-linked (GlcNAc...) asparagine). 2 cysteine pairs are disulfide-bonded: cysteine 193–cysteine 223 and cysteine 208–cysteine 235. Residues aspartate 194, arginine 200, glutamate 219, and tyrosine 225 each contribute to the a mannooligosaccharide derivative site.

Belongs to the OS-9 family. In terms of assembly, interacts with missfolded ER lumenal proteins.

The protein localises to the endoplasmic reticulum membrane. Its function is as follows. Lectin involved in the quality control of the secretory pathway. As a member of the endoplasmic reticulum-associated degradation lumenal (ERAD-L) surveillance system, targets misfolded endoplasmic reticulum lumenal glycoproteins for degradation. In Candida albicans (strain SC5314 / ATCC MYA-2876) (Yeast), this protein is Protein OS-9 homolog (YOS9).